The following is an 87-amino-acid chain: HssA/B-like protein 18 (87 aa).

This sequence belongs to the hssA/B family.

This Dictyostelium discoideum (Social amoeba) protein is HssA/B-like protein 18 (hssl18).